Reading from the N-terminus, the 105-residue chain is UPF0235 protein A1E_05380 (105 aa).

It belongs to the UPF0235 family.

The protein is UPF0235 protein A1E_05380 of Rickettsia canadensis (strain McKiel).